A 382-amino-acid polypeptide reads, in one-letter code: Flap endonuclease 1 (382 aa).

Residues methionine 1–arginine 104 form an N-domain region. Residue aspartate 34 coordinates Mg(2+). 2 residues coordinate DNA: arginine 47 and arginine 70. Position 86 (aspartate 86) interacts with Mg(2+). The disordered stretch occupies residues glycine 95–glycine 118. The segment covering glutamate 96 to threonine 115 has biased composition (basic and acidic residues). The segment at aspartate 122–tyrosine 253 is I-domain. Mg(2+)-binding residues include glutamate 158, glutamate 160, aspartate 179, and aspartate 181. DNA is bound at residue glutamate 158. Positions 231 and 233 each coordinate DNA. Mg(2+) is bound at residue aspartate 233. The segment at threonine 336–phenylalanine 344 is interaction with PCNA. The disordered stretch occupies residues threonine 353–lysine 382. Residues asparagine 364–asparagine 375 show a composition bias toward polar residues.

This sequence belongs to the XPG/RAD2 endonuclease family. FEN1 subfamily. Interacts with PCNA. Three molecules of FEN1 bind to one PCNA trimer with each molecule binding to one PCNA monomer. PCNA stimulates the nuclease activity without altering cleavage specificity. Mg(2+) is required as a cofactor. In terms of processing, phosphorylated. Phosphorylation upon DNA damage induces relocalization to the nuclear plasma.

The protein localises to the nucleus. The protein resides in the nucleolus. It localises to the nucleoplasm. It is found in the mitochondrion. Structure-specific nuclease with 5'-flap endonuclease and 5'-3' exonuclease activities involved in DNA replication and repair. During DNA replication, cleaves the 5'-overhanging flap structure that is generated by displacement synthesis when DNA polymerase encounters the 5'-end of a downstream Okazaki fragment. It enters the flap from the 5'-end and then tracks to cleave the flap base, leaving a nick for ligation. Also involved in the long patch base excision repair (LP-BER) pathway, by cleaving within the apurinic/apyrimidinic (AP) site-terminated flap. Acts as a genome stabilization factor that prevents flaps from equilibrating into structures that lead to duplications and deletions. Also possesses 5'-3' exonuclease activity on nicked or gapped double-stranded DNA, and exhibits RNase H activity. Also involved in replication and repair of rDNA and in repairing mitochondrial DNA. The chain is Flap endonuclease 1 from Glossina morsitans morsitans (Savannah tsetse fly).